Consider the following 145-residue polypeptide: Large-conductance mechanosensitive channel (145 aa).

The next 3 helical transmembrane spans lie at 14–34 (VMDL…VKSL), 38–58 (LIMP…YFLP), and 81–101 (GSFL…FLMV).

Belongs to the MscL family. As to quaternary structure, homopentamer.

It is found in the cell inner membrane. Its function is as follows. Channel that opens in response to stretch forces in the membrane lipid bilayer. May participate in the regulation of osmotic pressure changes within the cell. The protein is Large-conductance mechanosensitive channel of Rhizobium johnstonii (strain DSM 114642 / LMG 32736 / 3841) (Rhizobium leguminosarum bv. viciae).